We begin with the raw amino-acid sequence, 328 residues long: PLASTID TRANSCRIPTIONALLY ACTIVE protein 6, chloroplastic (328 aa).

Over residues methionine 1–serine 14 the composition is skewed to low complexity. Residues methionine 1–tyrosine 21 form a disordered region. Residues methionine 1–aspartate 59 constitute a chloroplast transit peptide. A Nuclear localization signal motif is present at residues arginine 267–leucine 275. Positions glutamate 301–leucine 319 match the RNA binding domain motif.

In terms of assembly, subunit of the plastid-encoded RNA polymerase (PEP) complex. Component of a large nuclear subcomplex that may include other PEP subunits (e.g. PTAC12/HMR/PAP5, PTAC14/PAP7 and PTAC7/PAP12). Binds directly to PTAC12/HMR/PAP5 in the nucleus. Interacts with MTERF5. In terms of tissue distribution, mostly expressed in rosette leaves, stems and flowers, and, to a lower extent, in roots and cauline leaves.

The protein resides in the plastid. It localises to the chloroplast. It is found in the chloroplast thylakoid. Its subcellular location is the nucleus. The protein localises to the nucleoplasm. Essential protein involved in plastid gene expression and in chloroplast biogenesis. Links photomorphogenesis and chloroplast biogenesis through its dual localization; required for the formation of late photobodies in the nucleus, as well as for phytochrome B-mediated signaling cascade and subsequent reshaping of the plastid-encoded RNA polymerase (PEP) activity. Binds RNA via specific recognition motifs of viral origin. Recruited by MTERF5 to the transcriptionally paused region of psbEFLJ. Promotes leaf greening. This chain is PLASTID TRANSCRIPTIONALLY ACTIVE protein 6, chloroplastic, found in Arabidopsis thaliana (Mouse-ear cress).